The primary structure comprises 81 residues: Cytotoxin 4a (81 aa).

The signal sequence occupies residues 1–21; the sequence is MKTLLLTLVVVTIVCLDLGYT. Cystine bridges form between C24/C42, C35/C59, C63/C74, and C75/C80.

This sequence belongs to the three-finger toxin family. Short-chain subfamily. Type IA cytotoxin sub-subfamily. In terms of assembly, monomer in solution; Homodimer and oligomer in the presence of negatively charged lipids forming a pore with a size ranging between 20 and 30 Angstroms. As to expression, expressed by the venom gland.

It localises to the secreted. The protein resides in the target cell membrane. In terms of biological role, shows cytolytic activity on many different cells by forming pore in lipid membranes. In vivo, increases heart rate or kills the animal by cardiac arrest. In addition, it binds to heparin with high affinity, interacts with Kv channel-interacting protein 1 (KCNIP1) in a calcium-independent manner, and binds to integrin alpha-V/beta-3 (ITGAV/ITGB3) with moderate affinity. The chain is Cytotoxin 4a from Naja sputatrix (Malayan spitting cobra).